Consider the following 372-residue polypeptide: Glutamate 5-kinase (372 aa).

Lys-14 contacts ATP. Substrate is bound by residues Ser-55, Asp-142, and Asn-154. ATP is bound by residues 174-175 and 216-222; these read SD and TGGMETK. In terms of domain architecture, PUA spans 279–357; sequence QGSIIVDLGA…WEIADVLGHK (79 aa).

This sequence belongs to the glutamate 5-kinase family.

It localises to the cytoplasm. It catalyses the reaction L-glutamate + ATP = L-glutamyl 5-phosphate + ADP. It functions in the pathway amino-acid biosynthesis; L-proline biosynthesis; L-glutamate 5-semialdehyde from L-glutamate: step 1/2. Catalyzes the transfer of a phosphate group to glutamate to form L-glutamate 5-phosphate. In Carboxydothermus hydrogenoformans (strain ATCC BAA-161 / DSM 6008 / Z-2901), this protein is Glutamate 5-kinase.